The chain runs to 460 residues: Bifunctional protein GlmU (460 aa).

A pyrophosphorylase region spans residues 1-229 (MSHYAIILAA…FEESLGVNDR (229 aa)). UDP-N-acetyl-alpha-D-glucosamine is bound by residues 8–11 (LAAG), Lys-22, Gln-72, and 77–78 (GT). Asp-102 contacts Mg(2+). Gly-139, Glu-154, Asn-169, and Asn-227 together coordinate UDP-N-acetyl-alpha-D-glucosamine. Mg(2+) is bound at residue Asn-227. The segment at 230–250 (VALATAEDVMRRRINKAHMIN) is linker. The interval 251-460 (GVTFQNPNAT…KKPHHPSQQK (210 aa)) is N-acetyltransferase. Positions 332 and 350 each coordinate UDP-N-acetyl-alpha-D-glucosamine. His-362 serves as the catalytic Proton acceptor. Positions 365 and 376 each coordinate UDP-N-acetyl-alpha-D-glucosamine. Acetyl-CoA contacts are provided by residues Ala-379, 385–386 (NY), Ser-404, Ala-422, and Arg-439.

It in the N-terminal section; belongs to the N-acetylglucosamine-1-phosphate uridyltransferase family. In the C-terminal section; belongs to the transferase hexapeptide repeat family. Homotrimer. Mg(2+) is required as a cofactor.

The protein localises to the cytoplasm. The catalysed reaction is alpha-D-glucosamine 1-phosphate + acetyl-CoA = N-acetyl-alpha-D-glucosamine 1-phosphate + CoA + H(+). The enzyme catalyses N-acetyl-alpha-D-glucosamine 1-phosphate + UTP + H(+) = UDP-N-acetyl-alpha-D-glucosamine + diphosphate. It participates in nucleotide-sugar biosynthesis; UDP-N-acetyl-alpha-D-glucosamine biosynthesis; N-acetyl-alpha-D-glucosamine 1-phosphate from alpha-D-glucosamine 6-phosphate (route II): step 2/2. The protein operates within nucleotide-sugar biosynthesis; UDP-N-acetyl-alpha-D-glucosamine biosynthesis; UDP-N-acetyl-alpha-D-glucosamine from N-acetyl-alpha-D-glucosamine 1-phosphate: step 1/1. It functions in the pathway bacterial outer membrane biogenesis; LPS lipid A biosynthesis. Its function is as follows. Catalyzes the last two sequential reactions in the de novo biosynthetic pathway for UDP-N-acetylglucosamine (UDP-GlcNAc). The C-terminal domain catalyzes the transfer of acetyl group from acetyl coenzyme A to glucosamine-1-phosphate (GlcN-1-P) to produce N-acetylglucosamine-1-phosphate (GlcNAc-1-P), which is converted into UDP-GlcNAc by the transfer of uridine 5-monophosphate (from uridine 5-triphosphate), a reaction catalyzed by the N-terminal domain. The protein is Bifunctional protein GlmU of Streptococcus thermophilus (strain CNRZ 1066).